The chain runs to 314 residues: Glutamyl-Q tRNA(Asp) synthetase (314 aa).

L-glutamate-binding positions include 14 to 18 (RFAPS) and Glu-50. The short motif at 17–27 (PSPTGPLHVGS) is the 'HIGH' region element. Zn(2+) is bound by residues Cys-106, Cys-108, Tyr-129, and Cys-133. 2 residues coordinate L-glutamate: Tyr-187 and Arg-205. The short motif at 243 to 247 (KLSKR) is the 'KMSKS' region element. Lys-246 provides a ligand contact to ATP.

This sequence belongs to the class-I aminoacyl-tRNA synthetase family. GluQ subfamily. It depends on Zn(2+) as a cofactor.

Functionally, catalyzes the tRNA-independent activation of glutamate in presence of ATP and the subsequent transfer of glutamate onto a tRNA(Asp). Glutamate is transferred on the 2-amino-5-(4,5-dihydroxy-2-cyclopenten-1-yl) moiety of the queuosine in the wobble position of the QUC anticodon. In Geobacter sulfurreducens (strain ATCC 51573 / DSM 12127 / PCA), this protein is Glutamyl-Q tRNA(Asp) synthetase.